Consider the following 211-residue polypeptide: Protein-L-isoaspartate O-methyltransferase (211 aa).

Residue Ser60 is part of the active site.

Belongs to the methyltransferase superfamily. L-isoaspartyl/D-aspartyl protein methyltransferase family.

It localises to the cytoplasm. The catalysed reaction is [protein]-L-isoaspartate + S-adenosyl-L-methionine = [protein]-L-isoaspartate alpha-methyl ester + S-adenosyl-L-homocysteine. Its function is as follows. Catalyzes the methyl esterification of L-isoaspartyl residues in peptides and proteins that result from spontaneous decomposition of normal L-aspartyl and L-asparaginyl residues. It plays a role in the repair and/or degradation of damaged proteins. This chain is Protein-L-isoaspartate O-methyltransferase, found in Pseudomonas syringae pv. tomato (strain ATCC BAA-871 / DC3000).